The following is a 277-amino-acid chain: Uracil phosphoribosyltransferase homolog (277 aa).

The tract at residues 1–69 (MEAMPCHNQR…AAAPSPAAED (69 aa)) is disordered. The segment covering 37–69 (AEPSEGSSSGSPSPDSSSGSNGAAAAPSPAAED) has biased composition (low complexity). GTP is bound by residues arginine 101, arginine 110, and 144–147 (EKGN). Arginine 154 provides a ligand contact to 5-phospho-alpha-D-ribose 1-diphosphate. Arginine 171 and arginine 200 together coordinate GTP. 206–214 (YPILSTGNT) contacts 5-phospho-alpha-D-ribose 1-diphosphate. A uracil-binding site is contributed by 267–269 (THF).

Belongs to the UPRTase family.

Its subcellular location is the cytoplasm. The protein localises to the nucleus. In Gallus gallus (Chicken), this protein is Uracil phosphoribosyltransferase homolog (UPRT).